We begin with the raw amino-acid sequence, 472 residues long: Divinyl ether synthase CYP74 (472 aa).

Cysteine 425 is a heme binding site.

The protein belongs to the cytochrome P450 family. Heme is required as a cofactor. Expressed mainly in bulbs, and at lower levels in roots.

It catalyses the reaction (13S)-hydroperoxy-(9Z,11E)-octadecadienoate = etheroleate + H2O. The enzyme catalyses (13S)-hydroperoxy-(9Z,11E,15Z)-octadecatrienoate = etherolenate + H2O. It carries out the reaction (9S)-hydroperoxy-(10E,12Z)-octadecadienoate = colneleate + H2O. The catalysed reaction is (9S)-hydroperoxy-(10E,12Z,15Z)-octadecatrienoate = colnelenate + H2O. It functions in the pathway lipid metabolism; oxylipin biosynthesis. Functionally, divinyl ether synthase involved in oxylipin biosynthesis. Catalyzes the conversion of (13S)-hydroperoxy-(9Z,11E)-octadecadienoate (13-HPOD) to etheroleate and (13S)-hydroperoxy-(9Z,11E,15Z)-octadecatrienoate (13-HPOT) to etherolenate. Catalyzes the conversion of (9S)-hydroperoxy-(10E,12Z)-octadecadienoate (9-HPOD) to colneleate and (9S)-hydroperoxy-(10E,12Z,15Z)-octadecatrienoate (9-HPOT) colnelenate. The chain is Divinyl ether synthase CYP74 from Allium sativum (Garlic).